We begin with the raw amino-acid sequence, 50 residues long: Insulin (50 aa).

3 disulfide bridges follow: Cys7/Cys36, Cys19/Cys49, and Cys35/Cys40.

Belongs to the insulin family. In terms of assembly, heterodimer of a B chain and an A chain linked by two disulfide bonds.

It localises to the secreted. In terms of biological role, insulin decreases blood glucose concentration. It increases cell permeability to monosaccharides, amino acids and fatty acids. It accelerates glycolysis, the pentose phosphate cycle, and glycogen synthesis in liver. This chain is Insulin (INS), found in Proechimys guairae (Guaira spiny rat).